Consider the following 274-residue polypeptide: Large ribosomal subunit protein uL2 (274 aa).

The disordered stretch occupies residues 224–274 (VAMNPVDHPHGGGEGRTSGGRHPVTPWGIPTKGYKTRRNKRSNKLIVQKRK). Residues 257-274 (YKTRRNKRSNKLIVQKRK) show a composition bias toward basic residues.

It belongs to the universal ribosomal protein uL2 family. As to quaternary structure, part of the 50S ribosomal subunit. Forms a bridge to the 30S subunit in the 70S ribosome.

In terms of biological role, one of the primary rRNA binding proteins. Required for association of the 30S and 50S subunits to form the 70S ribosome, for tRNA binding and peptide bond formation. It has been suggested to have peptidyltransferase activity; this is somewhat controversial. Makes several contacts with the 16S rRNA in the 70S ribosome. The protein is Large ribosomal subunit protein uL2 of Francisella tularensis subsp. holarctica (strain FTNF002-00 / FTA).